An 83-amino-acid chain; its full sequence is Acylphosphatase (83 aa).

Residues 1 to 83 (MIEGRVQRVG…TGDDWFEVRY (83 aa)) enclose the Acylphosphatase-like domain. Active-site residues include Arg12 and Asn30.

Belongs to the acylphosphatase family.

The catalysed reaction is an acyl phosphate + H2O = a carboxylate + phosphate + H(+). This Synechococcus sp. (strain CC9605) protein is Acylphosphatase (acyP).